The sequence spans 379 residues: Probable leucine aminopeptidase TRV_05286 (379 aa).

The N-terminal stretch at 1-18 (MKIATLAVVSAFAATAIA) is a signal peptide. His-182 and Asp-201 together coordinate Zn(2+). 2 N-linked (GlcNAc...) asparagine glycosylation sites follow: Asn-202 and Asn-226. The Zn(2+) site is built by Glu-240 and Asp-267. Cys-312 and Cys-316 are joined by a disulfide. His-345 lines the Zn(2+) pocket.

The protein belongs to the peptidase M28 family. M28E subfamily. In terms of assembly, monomer. Requires Zn(2+) as cofactor.

It localises to the secreted. Functionally, probable extracellular aminopeptidase which contributes to pathogenicity. This chain is Probable leucine aminopeptidase TRV_05286, found in Trichophyton verrucosum (strain HKI 0517).